The following is a 136-amino-acid chain: Probable endoribonuclease MazF7 (136 aa).

Residues 115 to 136 (TGPERGEAATHSPVRWTGGRDP) are disordered.

Belongs to the PemK/MazF family. In terms of assembly, forms a complex with cognate antitoxin MazE7.

Its function is as follows. Toxic component of a type II toxin-antitoxin (TA) system. Upon expression in E.coli and M.smegmatis inhibits cell growth and colony formation. Its toxic effect is neutralized by coexpression with cognate antitoxin MazE7. Probably an endoribonuclease. In Mycobacterium tuberculosis (strain ATCC 25618 / H37Rv), this protein is Probable endoribonuclease MazF7 (mazF7).